Consider the following 492-residue polypeptide: Catalase isozyme 2 (492 aa).

Active-site residues include His-65 and Asn-138. Tyr-348 is a binding site for heme.

This sequence belongs to the catalase family. As to quaternary structure, homotetramer. Heme serves as cofactor.

The protein localises to the peroxisome. It catalyses the reaction 2 H2O2 = O2 + 2 H2O. In terms of biological role, occurs in almost all aerobically respiring organisms and serves to protect cells from the toxic effects of hydrogen peroxide. The sequence is that of Catalase isozyme 2 (CAT2) from Gossypium hirsutum (Upland cotton).